The chain runs to 434 residues: Glutamate-1-semialdehyde 2,1-aminomutase (434 aa).

An N6-(pyridoxal phosphate)lysine modification is found at lysine 266.

Belongs to the class-III pyridoxal-phosphate-dependent aminotransferase family. HemL subfamily. In terms of assembly, homodimer. The cofactor is pyridoxal 5'-phosphate.

It localises to the cytoplasm. It catalyses the reaction (S)-4-amino-5-oxopentanoate = 5-aminolevulinate. Its pathway is porphyrin-containing compound metabolism; protoporphyrin-IX biosynthesis; 5-aminolevulinate from L-glutamyl-tRNA(Glu): step 2/2. The polypeptide is Glutamate-1-semialdehyde 2,1-aminomutase (Fusobacterium nucleatum subsp. nucleatum (strain ATCC 25586 / DSM 15643 / BCRC 10681 / CIP 101130 / JCM 8532 / KCTC 2640 / LMG 13131 / VPI 4355)).